Consider the following 192-residue polypeptide: Ribosome maturation factor RimM (192 aa).

The 76-residue stretch at 97-172 (EDEYYLADLI…VVLADPPALV (76 aa)) folds into the PRC barrel domain. A disordered region spans residues 168-192 (PPALVGEPEGPESPAEDDDGERHYD).

This sequence belongs to the RimM family. In terms of assembly, binds ribosomal protein uS19.

It localises to the cytoplasm. In terms of biological role, an accessory protein needed during the final step in the assembly of 30S ribosomal subunit, possibly for assembly of the head region. Essential for efficient processing of 16S rRNA. May be needed both before and after RbfA during the maturation of 16S rRNA. It has affinity for free ribosomal 30S subunits but not for 70S ribosomes. The polypeptide is Ribosome maturation factor RimM (Caulobacter sp. (strain K31)).